The following is a 917-amino-acid chain: Chitin synthase 1 (917 aa).

Positions 1–11 (MAYHGRGDGYD) are enriched in basic and acidic residues. A disordered region spans residues 1-56 (MAYHGRGDGYDGHQLQDLPGGHNQGDQHDDAQAPFLSENPMPYDNDRLGTDTPPVR). Residues 1 to 570 (MAYHGRGDGY…YKSGHNIVRM (570 aa)) lie on the Extracellular side of the membrane. Asn544 carries an N-linked (GlcNAc...) asparagine glycan. Residues 571–591 (FFFHVQLIYNIANVIFTWFSL) form a helical membrane-spanning segment. Residues 592-629 (ASYWLTTTVIMDLVGTPVTASSSSAEHHGWPFGDTVTP) lie on the Cytoplasmic side of the membrane. The chain crosses the membrane as a helical span at residues 630–650 (FFNAVLKYIYLAFVILQFILA). The Extracellular segment spans residues 651-664 (LGNRPKGSKWTYIT). A helical transmembrane segment spans residues 665 to 685 (SFFVFSLIQSYILVLSGYLVA). Residues 686-716 (RAFSVPLDQQLQLDNAKDAMASLFGGSGSAG) are Cytoplasmic-facing. The chain crosses the membrane as a helical span at residues 717-737 (VILVALVTIYGLYFLASFMYL). The Extracellular segment spans residues 738–744 (DPWHMFH). Residues 745-765 (SFPYYMLLMSTYINILMIYAF) form a helical membrane-spanning segment. Over 766-843 (NNWHDVSWGT…DLEDSYKSFR (78 aa)) the chain is Cytoplasmic. The helical transmembrane segment at 844–864 (TMLVVSWLFSNCLLAVVITSD) threads the bilayer. Residues 865-884 (NFNTFGIGQTASARTAWFFK) lie on the Extracellular side of the membrane. Residues 885–905 (FLLFATGALSVIRFIGFCWFL) form a helical membrane-spanning segment. The Cytoplasmic portion of the chain corresponds to 906–917 (GRTGIMCCFARR).

It belongs to the chitin synthase family. Class III subfamily.

The protein localises to the cell membrane. The catalysed reaction is [(1-&gt;4)-N-acetyl-beta-D-glucosaminyl](n) + UDP-N-acetyl-alpha-D-glucosamine = [(1-&gt;4)-N-acetyl-beta-D-glucosaminyl](n+1) + UDP + H(+). Its function is as follows. Polymerizes chitin, a structural polymer of the cell wall and septum, by transferring the sugar moiety of UDP-GlcNAc to the non-reducing end of the growing chitin polymer. This chain is Chitin synthase 1 (chs-1), found in Neurospora crassa (strain ATCC 24698 / 74-OR23-1A / CBS 708.71 / DSM 1257 / FGSC 987).